A 382-amino-acid polypeptide reads, in one-letter code: D-galactonate dehydratase (382 aa).

D183 is a binding site for Mg(2+). H185 acts as the Proton donor in catalysis. E209 and E235 together coordinate Mg(2+). H285 serves as the catalytic Proton acceptor.

This sequence belongs to the mandelate racemase/muconate lactonizing enzyme family. GalD subfamily. Requires Mg(2+) as cofactor.

The catalysed reaction is D-galactonate = 2-dehydro-3-deoxy-D-galactonate + H2O. It functions in the pathway carbohydrate acid metabolism; D-galactonate degradation; D-glyceraldehyde 3-phosphate and pyruvate from D-galactonate: step 1/3. Catalyzes the dehydration of D-galactonate to 2-keto-3-deoxy-D-galactonate. In Xanthomonas campestris pv. campestris (strain 8004), this protein is D-galactonate dehydratase.